The following is a 685-amino-acid chain: Probable transketolase (685 aa).

Residue His-32 participates in substrate binding. Residues His-72 and 121 to 123 contribute to the thiamine diphosphate site; that span reads GPL. Asp-162 contributes to the Mg(2+) binding site. The thiamine diphosphate site is built by Gly-163 and Asn-192. Mg(2+) is bound by residues Asn-192 and Ile-194. Substrate is bound by residues His-268, Arg-363, and Ser-390. Thiamine diphosphate is bound at residue His-268. 2 residues coordinate thiamine diphosphate: Glu-422 and Phe-448. The active-site Proton donor is Glu-422. Substrate is bound by residues His-472, Asp-480, and Arg-531.

The protein belongs to the transketolase family. As to quaternary structure, homodimer. The cofactor is Mg(2+). Requires Ca(2+) as cofactor. Mn(2+) serves as cofactor. It depends on Co(2+) as a cofactor. Thiamine diphosphate is required as a cofactor.

The enzyme catalyses D-sedoheptulose 7-phosphate + D-glyceraldehyde 3-phosphate = aldehydo-D-ribose 5-phosphate + D-xylulose 5-phosphate. Functionally, catalyzes the transfer of a two-carbon ketol group from a ketose donor to an aldose acceptor, via a covalent intermediate with the cofactor thiamine pyrophosphate. The polypeptide is Probable transketolase (Schizosaccharomyces pombe (strain 972 / ATCC 24843) (Fission yeast)).